The chain runs to 913 residues: Zinc finger protein 112 (913 aa).

In terms of domain architecture, KRAB spans 8 to 79 (VTFKDVAVVF…ETETPRDGCS (72 aa)). A Glycyl lysine isopeptide (Lys-Gly) (interchain with G-Cter in SUMO2) cross-link involves residue Lys256. Residues 258 to 280 (YPCTGYRKAFSNDSSSEVHQQFH) form a C2H2-type 1; degenerate zinc finger. The C2H2-type 2; degenerate zinc finger occupies 443-465 (YNSEECGNGFSLASHFQDLQIVH). The C2H2-type 3; degenerate zinc finger occupies 471-493 (YKRYVCSNSFSHNLYLQGHPKIH). The C2H2-type 4; degenerate zinc finger occupies 497 to 519 (KPRKEHGNGFNWSSKLKDHQRVH). 13 C2H2-type zinc fingers span residues 525–547 (YKCN…QRVH), 553–575 (YKCE…QRVH), 581–603 (YKCE…QRVH), 609–631 (YKCE…QRVH), 637–659 (FKCE…QRVH), 665–687 (YKCE…QRVH), 693–715 (YQCD…QSVH), 721–743 (YICE…QRVH), 749–771 (YKCE…RRVH), 777–799 (YKCE…QRVH), 805–827 (YKCE…HRVH), 833–855 (YKCE…QRVH), and 861–883 (YKCD…QRVH). Lys890 participates in a covalent cross-link: Glycyl lysine isopeptide (Lys-Gly) (interchain with G-Cter in SUMO2).

This sequence belongs to the krueppel C2H2-type zinc-finger protein family.

Its subcellular location is the nucleus. Functionally, may be involved in transcriptional regulation. This Homo sapiens (Human) protein is Zinc finger protein 112 (ZNF112).